The following is a 28-amino-acid chain: Alkaline serine protease NJP (28 aa).

Its activity is regulated as follows. Inhibited by PMSF. Not or very weakly inhibited by EDTA, EGTA, beta-mercaptoethanol, benzamidine, aprotinin, iodoacetic acid, pepstatin A and SBTI. Functionally, alkaline thrombin-like serine protease. Has fibrinolytic and fibrinogenolytic but not plasminogenolytic activity. Cleaves fibrinogen chains Aalpha, Bbeta and gamma chains in that order. Cleaves after Arg and Lys residues. This chain is Alkaline serine protease NJP, found in Hediste japonica (Polychaete worm).